Reading from the N-terminus, the 290-residue chain is 4-hydroxy-3-methylbut-2-enyl diphosphate reductase (290 aa).

[4Fe-4S] cluster is bound at residue Cys12. (2E)-4-hydroxy-3-methylbut-2-enyl diphosphate contacts are provided by His50 and His83. Residues His50 and His83 each contribute to the dimethylallyl diphosphate site. 2 residues coordinate isopentenyl diphosphate: His50 and His83. Cys105 serves as a coordination point for [4Fe-4S] cluster. His133 is a (2E)-4-hydroxy-3-methylbut-2-enyl diphosphate binding site. Residue His133 participates in dimethylallyl diphosphate binding. Residue His133 participates in isopentenyl diphosphate binding. Residue Glu135 is the Proton donor of the active site. Thr173 is a (2E)-4-hydroxy-3-methylbut-2-enyl diphosphate binding site. Cys202 contacts [4Fe-4S] cluster. Positions 230, 232, and 274 each coordinate (2E)-4-hydroxy-3-methylbut-2-enyl diphosphate. 3 residues coordinate dimethylallyl diphosphate: Ser230, Asn232, and Ser274. Ser230, Asn232, and Ser274 together coordinate isopentenyl diphosphate.

Belongs to the IspH family. The cofactor is [4Fe-4S] cluster.

The enzyme catalyses isopentenyl diphosphate + 2 oxidized [2Fe-2S]-[ferredoxin] + H2O = (2E)-4-hydroxy-3-methylbut-2-enyl diphosphate + 2 reduced [2Fe-2S]-[ferredoxin] + 2 H(+). It carries out the reaction dimethylallyl diphosphate + 2 oxidized [2Fe-2S]-[ferredoxin] + H2O = (2E)-4-hydroxy-3-methylbut-2-enyl diphosphate + 2 reduced [2Fe-2S]-[ferredoxin] + 2 H(+). The protein operates within isoprenoid biosynthesis; dimethylallyl diphosphate biosynthesis; dimethylallyl diphosphate from (2E)-4-hydroxy-3-methylbutenyl diphosphate: step 1/1. It functions in the pathway isoprenoid biosynthesis; isopentenyl diphosphate biosynthesis via DXP pathway; isopentenyl diphosphate from 1-deoxy-D-xylulose 5-phosphate: step 6/6. In terms of biological role, catalyzes the conversion of 1-hydroxy-2-methyl-2-(E)-butenyl 4-diphosphate (HMBPP) into a mixture of isopentenyl diphosphate (IPP) and dimethylallyl diphosphate (DMAPP). Acts in the terminal step of the DOXP/MEP pathway for isoprenoid precursor biosynthesis. This is 4-hydroxy-3-methylbut-2-enyl diphosphate reductase from Nitratidesulfovibrio vulgaris (strain ATCC 29579 / DSM 644 / CCUG 34227 / NCIMB 8303 / VKM B-1760 / Hildenborough) (Desulfovibrio vulgaris).